The chain runs to 34 residues: Protein HRURF (34 aa).

In terms of biological role, may function as an inhibitory translational control element that can negatively regulate protein translation of HR gene. This Homo sapiens (Human) protein is Protein HRURF.